A 485-amino-acid chain; its full sequence is Cobyric acid synthase (485 aa).

Positions 250–436 constitute a GATase cobBQ-type domain; the sequence is RRIVACPILP…IHGLLASPAL (187 aa). The Nucleophile role is filled by Cys332. The active site involves His428.

This sequence belongs to the CobB/CobQ family. CobQ subfamily.

It functions in the pathway cofactor biosynthesis; adenosylcobalamin biosynthesis. Functionally, catalyzes amidations at positions B, D, E, and G on adenosylcobyrinic A,C-diamide. NH(2) groups are provided by glutamine, and one molecule of ATP is hydrogenolyzed for each amidation. The protein is Cobyric acid synthase of Sphingopyxis alaskensis (strain DSM 13593 / LMG 18877 / RB2256) (Sphingomonas alaskensis).